The primary structure comprises 614 residues: Type VII secretion system protein EssD (614 aa).

The segment at 417–445 (QNHVTHGPKDSMVRSEGKHSISSHEMNSS) is disordered. A compositionally biased stretch (basic and acidic residues) spans 423-435 (GPKDSMVRSEGKH).

This sequence belongs to the EssD family. In terms of assembly, interacts (via C-terminal) with EssG; this interaction blocks EssD activity. Interacts with EssE.

It localises to the secreted. The protein resides in the cell membrane. In terms of biological role, component of the type VII secretion system (Ess). Plays a role in Ess secretion during infection. Required for the efficient secretion of EsxA. Required for abscess formation and staphylococcal persistence in host tissues. Possesses a toxic DNase activity that is modulated by EsaG by forming a nuclease toxin-antitoxin pair. This nuclease toxin targets competitor bacteria. The protein is Type VII secretion system protein EssD of Staphylococcus aureus (strain USA300).